The following is a 141-amino-acid chain: Hemoglobin subunit alpha (141 aa).

The 141-residue stretch at 1–141 folds into the Globin domain; sequence VLSPDDKKHV…VSTVLTSKYR (141 aa). S3 carries the post-translational modification Phosphoserine. N6-succinyllysine is present on residues K7 and K11. K16 carries the N6-acetyllysine; alternate modification. The residue at position 16 (K16) is an N6-succinyllysine; alternate. The residue at position 24 (Y24) is a Phosphotyrosine. Residue S35 is modified to Phosphoserine. The residue at position 40 (K40) is an N6-succinyllysine. S49 is subject to Phosphoserine. H58 serves as a coordination point for O2. Position 87 (H87) interacts with heme b. A Phosphoserine modification is found at S102. T108 bears the Phosphothreonine mark. Phosphoserine is present on residues S124 and S131. Phosphothreonine is present on residues T134 and T137. S138 carries the phosphoserine modification.

This sequence belongs to the globin family. Heterotetramer of two alpha chains and two beta chains. Red blood cells.

Involved in oxygen transport from the lung to the various peripheral tissues. In terms of biological role, hemopressin acts as an antagonist peptide of the cannabinoid receptor CNR1. Hemopressin-binding efficiently blocks cannabinoid receptor CNR1 and subsequent signaling. The sequence is that of Hemoglobin subunit alpha (HBA) from Theropithecus gelada (Gelada baboon).